The primary structure comprises 131 residues: MNLIQTLEKEQFDKLSAGKTIPEFGPGDTVIVNVKVVEGERSRVQAYEGVCIGRSGGGINESFTVRKISYGEGVERVFPLLSPMIDSIKVVRRGKVRRAKLYYLRNLRGKSARIVEKKQDRPAKVAAGAAE.

This sequence belongs to the bacterial ribosomal protein bL19 family.

This protein is located at the 30S-50S ribosomal subunit interface and may play a role in the structure and function of the aminoacyl-tRNA binding site. This Rhodopseudomonas palustris (strain HaA2) protein is Large ribosomal subunit protein bL19.